The following is a 494-amino-acid chain: Protein DETOXIFICATION 21 (494 aa).

Ala-2 carries the N-acetylalanine modification. Helical transmembrane passes span Leu-40–Ile-60, Leu-73–Ala-95, Ile-123–Leu-143, Ile-158–Met-178, Ile-188–Met-208, Gly-217–Val-237, Gly-268–Leu-288, Ala-297–Ala-317, Leu-340–Leu-360, Leu-384–Gly-404, Leu-416–Leu-436, and Val-441–Leu-461.

This sequence belongs to the multi antimicrobial extrusion (MATE) (TC 2.A.66.1) family.

Its subcellular location is the membrane. This Arabidopsis thaliana (Mouse-ear cress) protein is Protein DETOXIFICATION 21.